We begin with the raw amino-acid sequence, 430 residues long: Histidine--tRNA ligase (430 aa).

This sequence belongs to the class-II aminoacyl-tRNA synthetase family. As to quaternary structure, homodimer.

The protein resides in the cytoplasm. It carries out the reaction tRNA(His) + L-histidine + ATP = L-histidyl-tRNA(His) + AMP + diphosphate + H(+). This Chlamydia caviae (strain ATCC VR-813 / DSM 19441 / 03DC25 / GPIC) (Chlamydophila caviae) protein is Histidine--tRNA ligase.